The sequence spans 255 residues: 3-deoxy-manno-octulosonate cytidylyltransferase (255 aa).

It belongs to the KdsB family.

Its subcellular location is the cytoplasm. It catalyses the reaction 3-deoxy-alpha-D-manno-oct-2-ulosonate + CTP = CMP-3-deoxy-beta-D-manno-octulosonate + diphosphate. The protein operates within nucleotide-sugar biosynthesis; CMP-3-deoxy-D-manno-octulosonate biosynthesis; CMP-3-deoxy-D-manno-octulosonate from 3-deoxy-D-manno-octulosonate and CTP: step 1/1. Its pathway is bacterial outer membrane biogenesis; lipopolysaccharide biosynthesis. In terms of biological role, activates KDO (a required 8-carbon sugar) for incorporation into bacterial lipopolysaccharide in Gram-negative bacteria. The sequence is that of 3-deoxy-manno-octulosonate cytidylyltransferase from Xanthobacter autotrophicus (strain ATCC BAA-1158 / Py2).